The chain runs to 151 residues: FAD synthase (151 aa).

ATP contacts are provided by residues 21 to 22 (TF), 26 to 29 (HPGH), and Asp104.

The protein belongs to the archaeal FAD synthase family. In terms of assembly, homodimer. It depends on a divalent metal cation as a cofactor.

It carries out the reaction FMN + ATP + H(+) = FAD + diphosphate. It functions in the pathway cofactor biosynthesis; FAD biosynthesis; FAD from FMN: step 1/1. Its function is as follows. Catalyzes the transfer of the AMP portion of ATP to flavin mononucleotide (FMN) to produce flavin adenine dinucleotide (FAD) coenzyme. This is FAD synthase from Methanosarcina mazei (strain ATCC BAA-159 / DSM 3647 / Goe1 / Go1 / JCM 11833 / OCM 88) (Methanosarcina frisia).